A 572-amino-acid polypeptide reads, in one-letter code: DNA mismatch repair protein MutL (572 aa).

Belongs to the DNA mismatch repair MutL/HexB family.

This protein is involved in the repair of mismatches in DNA. It is required for dam-dependent methyl-directed DNA mismatch repair. May act as a 'molecular matchmaker', a protein that promotes the formation of a stable complex between two or more DNA-binding proteins in an ATP-dependent manner without itself being part of a final effector complex. The polypeptide is DNA mismatch repair protein MutL (Dictyoglomus turgidum (strain DSM 6724 / Z-1310)).